The following is a 297-amino-acid chain: Ribosomal RNA small subunit methyltransferase A (297 aa).

Positions 31, 33, 58, 79, 104, and 129 each coordinate S-adenosyl-L-methionine.

The protein belongs to the class I-like SAM-binding methyltransferase superfamily. rRNA adenine N(6)-methyltransferase family. RsmA subfamily.

Its subcellular location is the cytoplasm. It carries out the reaction adenosine(1518)/adenosine(1519) in 16S rRNA + 4 S-adenosyl-L-methionine = N(6)-dimethyladenosine(1518)/N(6)-dimethyladenosine(1519) in 16S rRNA + 4 S-adenosyl-L-homocysteine + 4 H(+). Functionally, specifically dimethylates two adjacent adenosines (A1518 and A1519) in the loop of a conserved hairpin near the 3'-end of 16S rRNA in the 30S particle. May play a critical role in biogenesis of 30S subunits. In Staphylococcus aureus (strain bovine RF122 / ET3-1), this protein is Ribosomal RNA small subunit methyltransferase A.